A 291-amino-acid chain; its full sequence is Signal peptidase I (291 aa).

Residues 1–45 lie on the Cytoplasmic side of the membrane; it reads MTMKKLTSTTTTLWDNKLFINNLKNFMQTNTESNNNKTTAQEWKS. A helical transmembrane segment spans residues 46–66; it reads FILVVVIALMIRILIIESFVV. Residues 67 to 291 lie on the Periplasmic side of the membrane; the sequence is PTGSMKATIL…IFRNLYSIED (225 aa). Catalysis depends on residues serine 70 and lysine 133.

This sequence belongs to the peptidase S26 family.

Its subcellular location is the cell inner membrane. The enzyme catalyses Cleavage of hydrophobic, N-terminal signal or leader sequences from secreted and periplasmic proteins.. The polypeptide is Signal peptidase I (lepB) (Rickettsia bellii (strain RML369-C)).